The primary structure comprises 350 residues: S-adenosylmethionine:tRNA ribosyltransferase-isomerase (350 aa).

Belongs to the QueA family. As to quaternary structure, monomer.

It localises to the cytoplasm. The enzyme catalyses 7-aminomethyl-7-carbaguanosine(34) in tRNA + S-adenosyl-L-methionine = epoxyqueuosine(34) in tRNA + adenine + L-methionine + 2 H(+). It participates in tRNA modification; tRNA-queuosine biosynthesis. Its function is as follows. Transfers and isomerizes the ribose moiety from AdoMet to the 7-aminomethyl group of 7-deazaguanine (preQ1-tRNA) to give epoxyqueuosine (oQ-tRNA). The sequence is that of S-adenosylmethionine:tRNA ribosyltransferase-isomerase from Vibrio parahaemolyticus serotype O3:K6 (strain RIMD 2210633).